The sequence spans 325 residues: Cytochrome c1, heme protein, mitochondrial (325 aa).

The N-terminal 84 residues, 1 to 84 (MAAAAASLRR…AVALHSAVSA (84 aa)), are a transit peptide targeting the mitochondrion. At 85 to 287 (SDLELHPPSY…SEPEHDHRKR (203 aa)) the chain is on the mitochondrial intermembrane side. In terms of domain architecture, Cytochrome c spans 108-209 (TSIRRGFQVY…IVRARHGGED (102 aa)). Heme c is bound by residues Cys-121, Cys-124, His-125, and Met-244. The chain crosses the membrane as a helical span at residues 288–308 (MGLKMLLMMGLLLPLTYAMKR). The Mitochondrial matrix segment spans residues 309–325 (HKWSVLKSRKLAYRPPK).

Belongs to the cytochrome c family. As to quaternary structure, component of the ubiquinol-cytochrome c oxidoreductase (cytochrome b-c1 complex, complex III, CIII), a multisubunit enzyme composed of 11 subunits. The complex is composed of 3 respiratory subunits cytochrome b, cytochrome c1 and Rieske protein UQCRFS1, 2 core protein subunits UQCRC1/QCR1 and UQCRC2/QCR2, and 6 low-molecular weight protein subunits UQCRH/QCR6, UQCRB/QCR7, UQCRQ/QCR8, UQCR10/QCR9, UQCR11/QCR10 and subunit 9, the cleavage product of Rieske protein UQCRFS1. The complex exists as an obligatory dimer and forms supercomplexes (SCs) in the inner mitochondrial membrane with NADH-ubiquinone oxidoreductase (complex I, CI) and cytochrome c oxidase (complex IV, CIV), resulting in different assemblies (supercomplex SCI(1)III(2)IV(1) and megacomplex MCI(2)III(2)IV(2)). Interacts with FLVCR2; this interaction occurs in the absence of heme and is disrupted upon heme binding. Requires heme c as cofactor.

Its subcellular location is the mitochondrion inner membrane. The catalysed reaction is a quinol + 2 Fe(III)-[cytochrome c](out) = a quinone + 2 Fe(II)-[cytochrome c](out) + 2 H(+)(out). Functionally, component of the ubiquinol-cytochrome c oxidoreductase, a multisubunit transmembrane complex that is part of the mitochondrial electron transport chain which drives oxidative phosphorylation. The respiratory chain contains 3 multisubunit complexes succinate dehydrogenase (complex II, CII), ubiquinol-cytochrome c oxidoreductase (cytochrome b-c1 complex, complex III, CIII) and cytochrome c oxidase (complex IV, CIV), that cooperate to transfer electrons derived from NADH and succinate to molecular oxygen, creating an electrochemical gradient over the inner membrane that drives transmembrane transport and the ATP synthase. The cytochrome b-c1 complex catalyzes electron transfer from ubiquinol to cytochrome c, linking this redox reaction to translocation of protons across the mitochondrial inner membrane, with protons being carried across the membrane as hydrogens on the quinol. In the process called Q cycle, 2 protons are consumed from the matrix, 4 protons are released into the intermembrane space and 2 electrons are passed to cytochrome c. Cytochrome c1 is a catalytic core subunit containing a c-type heme. It transfers electrons from the [2Fe-2S] iron-sulfur cluster of the Rieske protein to cytochrome c. The polypeptide is Cytochrome c1, heme protein, mitochondrial (Cyc1) (Mus musculus (Mouse)).